The following is a 237-amino-acid chain: Protein PetR (237 aa).

Residues histidine 8 to leucine 121 enclose the Response regulatory domain. 4-aspartylphosphate is present on aspartate 57. The H-T-H motif DNA-binding region spans alanine 77 to glycine 95. Residues proline 132–proline 236 constitute a DNA-binding region (ompR/PhoB-type).

In terms of biological role, necessary for photosynthetic and respiratory growth. Probable promoter-specific protein mediating the interaction between DNA and RNA polymerase. This Rhodobacter capsulatus (strain ATCC BAA-309 / NBRC 16581 / SB1003) protein is Protein PetR (petR).